Consider the following 159-residue polypeptide: NADH-quinone oxidoreductase subunit I (159 aa).

4Fe-4S ferredoxin-type domains lie at 51–80 and 90–119; these read RRYE…IEAD and TRYD…EGPN. Residues C60, C63, C66, C70, C99, C102, C105, and C109 each coordinate [4Fe-4S] cluster.

It belongs to the complex I 23 kDa subunit family. NDH-1 is composed of 14 different subunits. Subunits NuoA, H, J, K, L, M, N constitute the membrane sector of the complex. [4Fe-4S] cluster serves as cofactor.

Its subcellular location is the cell inner membrane. It carries out the reaction a quinone + NADH + 5 H(+)(in) = a quinol + NAD(+) + 4 H(+)(out). NDH-1 shuttles electrons from NADH, via FMN and iron-sulfur (Fe-S) centers, to quinones in the respiratory chain. The immediate electron acceptor for the enzyme in this species is believed to be ubiquinone. Couples the redox reaction to proton translocation (for every two electrons transferred, four hydrogen ions are translocated across the cytoplasmic membrane), and thus conserves the redox energy in a proton gradient. This is NADH-quinone oxidoreductase subunit I from Rickettsia akari (strain Hartford).